We begin with the raw amino-acid sequence, 257 residues long: Snake venom serine protease CL5 (257 aa).

An N-terminal signal peptide occupies residues 1–18; sequence MVLIRVLANLLILQLSYA. The propeptide occupies 19–24; it reads QRSSEL. The Peptidase S1 domain maps to 25–248; the sequence is VIGGDECNIN…HLDWIQSIIA (224 aa). 5 disulfide bridges follow: Cys-31-Cys-162, Cys-49-Cys-65, Cys-141-Cys-209, Cys-173-Cys-188, and Cys-199-Cys-224. Catalysis depends on His-64, which acts as the Charge relay system. N-linked (GlcNAc...) asparagine glycans are attached at residues Asn-78 and Asn-102. The active-site Charge relay system is Asp-109. 2 N-linked (GlcNAc...) asparagine glycosylation sites follow: Asn-153 and Asn-169. Ser-203 acts as the Charge relay system in catalysis. Asn-250 is a glycosylation site (N-linked (GlcNAc...) asparagine).

It belongs to the peptidase S1 family. Snake venom subfamily. Monomer. As to expression, expressed by the venom gland.

It localises to the secreted. Its function is as follows. Snake venom serine protease that may act in the hemostasis system of the prey. The polypeptide is Snake venom serine protease CL5 (Trimeresurus stejnegeri (Chinese green tree viper)).